Reading from the N-terminus, the 414-residue chain is HERV-H LTR-associating protein 2 (414 aa).

Residues 1-22 (MKAQTALSFFLILITSLSGSQG) form the signal peptide. An Ig-like V-type 1 domain is found at 61-131 (IHWKYQDSYK…YVGTAIQVIT (71 aa)). N-linked (GlcNAc...) asparagine glycans are attached at residues N90 and N103. Residues 138–222 (VGVFLTPVMK…ENSLLKQTWT (85 aa)) form the Ig-like C1-type domain. 2 disulfide bridges follow: C159-C210 and C243-C317. In terms of domain architecture, Ig-like V-type 2 spans 235–328 (QSEHVSLSCQ…ISSDEYTLLT (94 aa)). An N-linked (GlcNAc...) asparagine glycan is attached at N318. A helical membrane pass occupies residues 345–365 (KGLWILVPSAILAAFLLIWSV). Residues 383 to 414 (GAQQERCCVPPGERCPSAPDNGEENVPLSGKV) are disordered.

In terms of assembly, interacts with TMIGD2. As to expression, expressed at high levels in colon, kidney, testis, lung and pancreas, and at lower levels in small intestine, liver and skeletal muscle. In immune cells, highly expressed in B-cells, dendritic cells and macrophages. Not detected in T-cells.

Its subcellular location is the membrane. Through interaction with TMIGD2, costimulates T-cells in the context of TCR-mediated activation. Enhances T-cell proliferation and cytokine production via an AKT-dependent signaling cascade. The sequence is that of HERV-H LTR-associating protein 2 (HHLA2) from Homo sapiens (Human).